Reading from the N-terminus, the 412-residue chain is Maintenance of mitochondrial morphology protein 1 (412 aa).

Topologically, residues 1–81 (MTKELIKTEA…PANNWTFTQG (81 aa)) are lumenal. Residues 82–102 (LVLGQISVIFIIIVFVKFFVF) form a helical membrane-spanning segment. Over 103 to 412 (ADSSTIPTKK…RSDSGTSENL (310 aa)) the chain is Cytoplasmic. The region spanning 165-382 (SPESLDWFNV…EPRFQVVRLP (218 aa)) is the SMP-LTD domain. Residues 389–412 (KNTREPINKKTSVSRSDSGTSENL) form a disordered region. The span at 397 to 412 (KKTSVSRSDSGTSENL) shows a compositional bias: polar residues.

This sequence belongs to the MMM1 family. As to quaternary structure, homodimer. Component of the ER-mitochondria encounter structure (ERMES) or MDM complex, composed of MMM1, MDM10, MDM12 and MDM34. An MMM1 homodimer associates with one molecule of MDM12 on each side in a pairwise head-to-tail manner, and the SMP-LTD domains of MMM1 and MDM12 generate a continuous hydrophobic tunnel for phospholipid trafficking.

It localises to the endoplasmic reticulum membrane. Its function is as follows. Component of the ERMES/MDM complex, which serves as a molecular tether to connect the endoplasmic reticulum (ER) and mitochondria. Components of this complex are involved in the control of mitochondrial shape and protein biogenesis, and function in nonvesicular lipid trafficking between the ER and mitochondria. The MDM12-MMM1 subcomplex functions in the major beta-barrel assembly pathway that is responsible for biogenesis of all outer membrane beta-barrel proteins, and acts in a late step after the SAM complex. The MDM10-MDM12-MMM1 subcomplex further acts in the TOM40-specific pathway after the action of the MDM12-MMM1 complex. Essential for establishing and maintaining the structure of mitochondria and maintenance of mtDNA nucleoids. This is Maintenance of mitochondrial morphology protein 1 from Candida tropicalis (strain ATCC MYA-3404 / T1) (Yeast).